We begin with the raw amino-acid sequence, 773 residues long: Endonuclease MutS2 (773 aa).

334-341 (GANAGGKT) lines the ATP pocket. The Smr domain occupies 698–773 (VDLRGMRADV…GDGMTMVTLK (76 aa)).

This sequence belongs to the DNA mismatch repair MutS family. MutS2 subfamily. Homodimer. Binds to stalled ribosomes, contacting rRNA.

In terms of biological role, endonuclease that is involved in the suppression of homologous recombination and thus may have a key role in the control of bacterial genetic diversity. Its function is as follows. Acts as a ribosome collision sensor, splitting the ribosome into its 2 subunits. Detects stalled/collided 70S ribosomes which it binds and splits by an ATP-hydrolysis driven conformational change. Acts upstream of the ribosome quality control system (RQC), a ribosome-associated complex that mediates the extraction of incompletely synthesized nascent chains from stalled ribosomes and their subsequent degradation. Probably generates substrates for RQC. The protein is Endonuclease MutS2 of Solidesulfovibrio magneticus (strain ATCC 700980 / DSM 13731 / RS-1) (Desulfovibrio magneticus).